Reading from the N-terminus, the 548-residue chain is Tyrosine-protein phosphatase non-receptor type 61F (548 aa).

At 1-525 the chain is on the cytoplasmic side; sequence MSEQKTSGSG…KQLAAKKRRS (525 aa). One can recognise a Tyrosine-protein phosphatase domain in the interval 33 to 296; it reads FYKEICETCD…DFSYQAIIEG (264 aa). The tract at residues 46–65 is disordered; sequence KEKQFSTSESERHTNRGLNR. S83 bears the Phosphoserine mark. Y86 bears the Phosphotyrosine mark. Residues D203, 237–243, and Q281 contribute to the substrate site; that span reads CSAGIGR. The active-site Phosphocysteine intermediate is C237. 3 short sequence motifs (PXXP motif (SH3-binding)) span residues 327 to 330, 339 to 342, and 394 to 397; these read PPLP and PLAP. The disordered stretch occupies residues 386–517; the sequence is EVADSRPLPP…RKQRENEDKQ (132 aa). A compositionally biased stretch (acidic residues) spans 404–428; the sequence is SDSDEDYLLDDDDEDDTDEDEEYET. 2 short sequence motifs (PXXP motif (SH3-binding)) span residues 459-462 and 480-483; these read PAVP and PASP. Residues 502-517 are compositionally biased toward basic and acidic residues; the sequence is KVNDMKRKQRENEDKQ. The chain crosses the membrane as a helical span at residues 526-545; sequence LLTYIAAGVVVGVICAYAYT. Topologically, residues 546–548 are extracellular; that stretch reads KLG.

Belongs to the protein-tyrosine phosphatase family. Non-receptor class 1 subfamily. As to quaternary structure, interacts (via C-terminus) with dock/dreadlocks; this interaction is independent of insulin stimulation and is required for dephosphorylation of the insulin-like receptor InR.

The protein localises to the cytoplasm. It is found in the membrane. Its subcellular location is the endomembrane system. It localises to the nucleus. It catalyses the reaction O-phospho-L-tyrosyl-[protein] + H2O = L-tyrosyl-[protein] + phosphate. Its function is as follows. Non-receptor protein tyrosine phosphatase. Required for maintaining dock/dreadlocks in its non-phosphorylated state. Negative regulator of InR/insulin-like receptor signaling through dephosphorylation of tyrosines when recruited by dock/dreadlocks. This is Tyrosine-protein phosphatase non-receptor type 61F from Drosophila melanogaster (Fruit fly).